The sequence spans 1607 residues: Thrombospondin type-1 domain-containing protein 7B (1607 aa).

An N-terminal signal peptide occupies residues 1-31; sequence MFLRSDLAVTHWVSRSMRKLFLVLSLLLSQA. Residues 32-1556 lie on the Extracellular side of the membrane; the sequence is AHLEGRKDNQ…QPLDPDGRVK (1525 aa). TSP type-1 domains are found at residues 40–98, 102–177, 179–233, 336–392, 399–482, 484–543, 601–661, 662–735, 737–796, 797–869, 871–924, 925–999, 1001–1126, 1128–1182, 1183–1246, 1248–1303, 1304–1369, and 1371–1432; these read NQFL…RVCD, DLFQ…IPCP, DCVV…VSCP, DCET…IAEG, PRYS…VPCS, DCIV…PMCH, DCVV…HSCT, QLYW…LPCK, DCLV…SLCP, SYRW…IPCR, DCTF…CPCD, TFMS…IPCP, DCKL…LLCP, ECVM…ENCF, QFQY…VECV, NCQL…TPCY, SWVL…VPCP, and DCHI…GKCY. Residues N150 and N219 are each glycosylated (N-linked (GlcNAc...) asparagine). 3 disulfides stabilise this stretch: C411–C477, C431–C481, and C442–C466. 3 cysteine pairs are disulfide-bonded: C602-C643, C613-C617, and C655-C660. N683 is a glycosylation site (N-linked (GlcNAc...) asparagine). 3 disulfides stabilise this stretch: C738–C779, C749–C753, and C789–C795. N757 is a glycosylation site (N-linked (GlcNAc...) asparagine). N842 carries an N-linked (GlcNAc...) asparagine glycan. N-linked (GlcNAc...) asparagine glycosylation occurs at N933. Disulfide bonds link C937-C994, C960-C998, C971-C984, C1002-C1039, and C1013-C1017. A glycan (N-linked (GlcNAc...) asparagine) is linked at N985. An N-linked (GlcNAc...) asparagine glycan is attached at N1105. C1121 and C1125 are disulfide-bonded. Residues N1187 and N1199 are each glycosylated (N-linked (GlcNAc...) asparagine). 3 disulfide bridges follow: C1249-C1287, C1260-C1264, and C1297-C1302. N1309 and N1335 each carry an N-linked (GlcNAc...) asparagine glycan. 3 cysteine pairs are disulfide-bonded: C1372-C1416, C1383-C1387, and C1426-C1431. Residues N1457 and N1525 are each glycosylated (N-linked (GlcNAc...) asparagine). A helical transmembrane segment spans residues 1557-1577; sequence MWVYGVSGGSFLIMIFLVFTS. Residues 1578-1607 are Cytoplasmic-facing; that stretch reads YLVCKKPKPHQSTPRHQKPLTLAYDGDLDM.

It is found in the membrane. The sequence is that of Thrombospondin type-1 domain-containing protein 7B from Mus musculus (Mouse).